Here is a 477-residue protein sequence, read N- to C-terminus: GH30 family xylanase (477 aa).

An N-terminal signal peptide occupies residues 1-19 (MYSLLIALLCAGTAVDAQA). Asparagine 194, asparagine 237, and asparagine 331 each carry an N-linked (GlcNAc...) asparagine glycan.

It belongs to the glycosyl hydrolase 30 family.

The protein resides in the secreted. Activity is enhanced by 10 mM Co(2+), Cu 2(2+) and Mn(2+) to levels as high as 44%. Partial inhibition of activity from 5 to 15% is observed in the presence of the following compouinds at a centration of 10 mM (from higher inhibition to lower): EDTA &gt; Mg(2+) &gt; urea, Zn(2+) &gt; Fe(3+). Xylanase exhibiting endo- and exo-xylanase activity. Shows the highest activity toward beechwood glucuronoxylan, which consists of a beta-1,4-linked xylose backbone decorated with the methylated form of D-glucuronic acid (MeGlcA) attached directly to the main chain at xylose C2. Also acts against wheat arabinoxylan, a xylan without MeGlcA substituents along the main chain, but the xylanase activity is about two orders of magnitude lower than that achieved in the case of beechwood xylan. Shows no activity against carob galactomannan, konjac glucomannan, or barley beta-glucan. The recombinant xylanase also exhibits an exo-activity by releasing processively disaccharide units from the non-reducing end of linear and decorated xylooligosaccharides (XOS). In Thermothelomyces thermophilus (strain ATCC 42464 / BCRC 31852 / DSM 1799) (Sporotrichum thermophile), this protein is GH30 family xylanase.